A 352-amino-acid chain; its full sequence is Mitochondrial hydrolase YKR070W (352 aa).

The protein belongs to the HAD-like hydrolase superfamily.

It is found in the mitochondrion. This chain is Mitochondrial hydrolase YKR070W, found in Saccharomyces cerevisiae (strain ATCC 204508 / S288c) (Baker's yeast).